The primary structure comprises 561 residues: Urocanate hydratase (561 aa).

Residues 52 to 53, glutamine 130, 176 to 178, glutamate 196, arginine 201, 242 to 243, 263 to 267, 273 to 274, and tyrosine 322 contribute to the NAD(+) site; these read GG, GMG, NA, QTSAH, and YL. Cysteine 410 is a catalytic residue. Glycine 492 lines the NAD(+) pocket.

The protein belongs to the urocanase family. It depends on NAD(+) as a cofactor.

Its subcellular location is the cytoplasm. The enzyme catalyses 4-imidazolone-5-propanoate = trans-urocanate + H2O. It participates in amino-acid degradation; L-histidine degradation into L-glutamate; N-formimidoyl-L-glutamate from L-histidine: step 2/3. Its function is as follows. Catalyzes the conversion of urocanate to 4-imidazolone-5-propionate. The protein is Urocanate hydratase of Salmonella choleraesuis (strain SC-B67).